A 192-amino-acid polypeptide reads, in one-letter code: Ribosomal RNA large subunit methyltransferase E (192 aa).

Positions 46, 48, 63, 79, and 102 each coordinate S-adenosyl-L-methionine. Lys142 serves as the catalytic Proton acceptor.

The protein belongs to the class I-like SAM-binding methyltransferase superfamily. RNA methyltransferase RlmE family.

It is found in the cytoplasm. The catalysed reaction is uridine(2552) in 23S rRNA + S-adenosyl-L-methionine = 2'-O-methyluridine(2552) in 23S rRNA + S-adenosyl-L-homocysteine + H(+). Its function is as follows. Specifically methylates the uridine in position 2552 of 23S rRNA at the 2'-O position of the ribose in the fully assembled 50S ribosomal subunit. This is Ribosomal RNA large subunit methyltransferase E from Wolbachia pipientis wMel.